The primary structure comprises 401 residues: tRNA (guanine-N(7)-)-methyltransferase non-catalytic subunit wuho (401 aa).

The segment at 45-85 (KGRPRKYFDADSDSDEEQQNGDEPGTGKNNGGGDTGKKDQD) is disordered. The span at 54–64 (ADSDSDEEQQN) shows a compositional bias: acidic residues. WD repeat units follow at residues 86–125 (DQTNAIVALDVNEDRSLVAVATGDKSLYLFEVDQDGRTLK), 174–213 (GHMSQVLDVLIDTEEKLIITSDRDEKIRVTCHPDCHNIET), and 217–255 (GHTEFVSHLEFLGPELLLSLSGDKTLRWWNYTSGKELAR).

This sequence belongs to the WD repeat TRM82 family. As to quaternary structure, forms a heterodimer with the catalytic subunit.

The protein resides in the nucleus. It functions in the pathway tRNA modification; N(7)-methylguanine-tRNA biosynthesis. Its function is as follows. Required for the formation of N(7)-methylguanine at position 46 (m7G46) in tRNA. In the complex, it is required to stabilize and induce conformational changes of the catalytic subunit. This Culex quinquefasciatus (Southern house mosquito) protein is tRNA (guanine-N(7)-)-methyltransferase non-catalytic subunit wuho.